Here is a 453-residue protein sequence, read N- to C-terminus: MENYLQGCRAALQESRPIHVVLGNEACDLDSMVSALALAFYLAKTTEAEEVFVPVLNIKRSELPLRGDNVFFLQKIHIPESVLIFRDEIDLHALHQAGQLTLILVDHHVLPKSDAALEEAVAEVLDHRPIDQRHCPPCHVSVELVGSCATLVAERILQGAPEILDRQTAALLHGTILLDCVNMDLKIGKATLKDSHYVEKLEALFPDLPSRNDIFDSLQKAKFDVSGLTTEQMLRKDQKTISRQGTKVAISAIYMDMEAFLQRSGLLADLRAFCQAHSYDALVAMTIFFNTYNEPVRQLAVFCPHAALRMTICGILEHSHSPPLKLTPVPSSHPDLQAYLQGNTQISRKKVLPLLQEALSAYFDSTNIPLGQPETEGVSREQVDKELDRAGNSLLSGLSQDEEEPPLPPTPMNSLVDECPLDQGLPKFSAEVIFEKCSQISLSEPTTASLSKK.

N-acetylmethionine is present on methionine 1. The Mn(2+) site is built by aspartate 28, aspartate 30, aspartate 106, and aspartate 179. A DHH motif motif is present at residues 106 to 108 (DHH). An essential for homodimerization region spans residues 393–420 (SLLSGLSQDEEEPPLPPTPMNSLVDECP). The segment at 396–419 (SGLSQDEEEPPLPPTPMNSLVDEC) is disordered. Serine 399 carries the post-translational modification Phosphoserine. At threonine 410 the chain carries Phosphothreonine. Serine 414 carries the post-translational modification Phosphoserine.

The protein belongs to the PPase class C family. Prune subfamily. Homooligomer. Able to homodimerize via its C-terminal domain. Interacts with NME1. Interacts with GSK3; at focal adhesion complexes where paxillin and vinculin are colocalized. Requires Mn(2+) as cofactor.

It is found in the cytoplasm. It localises to the nucleus. The protein resides in the cell junction. Its subcellular location is the focal adhesion. The catalysed reaction is diphosphate + H2O = 2 phosphate + H(+). Activated by magnesium ions and inhibited by manganese ions. Inhibited by dipyridamole, moderately sensitive to IBMX and inhibited by vinpocetine. Functionally, phosphodiesterase (PDE) that has higher activity toward cAMP than cGMP, as substrate. Plays a role in cell proliferation, is able to induce cell motility and acts as a negative regulator of NME1. This chain is Exopolyphosphatase PRUNE1 (PRUNE1), found in Bos taurus (Bovine).